A 429-amino-acid polypeptide reads, in one-letter code: MDRIHITGGTPLNGTIPISGAKNAALPLMIASLLTGETLELINVPRLADIAALTRILGNHGVDHMVVGKRPGQTAETGQTVRLTASNVIDTTAPYELVSTMRASFWVIAPLLARFGEAKVSLPGGCAIGTRPVNLLIMALEKLGAEIEIDGGYVVAKTKNGLRGAEIVFPSVTVGGTHVALMAAALAYGTTVIDNAAREPEVVDLAECLIKMGARIEGAGTSRIVVEGVARLGGTRHEVLPDRIETGTYAMAVAMTGGDVSLVNTRTDLLASALETLASTGTEVTALPDGIRVRRNGGGISPADVTTDPFPGFPTDLQAQFMALMTLAKGQSRIRETIFENRFMHVQELARLGARIRLDGDLAVVEGVERLKGAPVMATDLRASVSLVIGALAAEGETQINRVYHLDRGFEALEAKLARCGAQIERVRA.

Residue 22–23 participates in phosphoenolpyruvate binding; it reads KN. Arg-102 contacts UDP-N-acetyl-alpha-D-glucosamine. The Proton donor role is filled by Cys-126. Cys-126 is modified (2-(S-cysteinyl)pyruvic acid O-phosphothioketal). Asp-316 and Ile-338 together coordinate UDP-N-acetyl-alpha-D-glucosamine.

It belongs to the EPSP synthase family. MurA subfamily.

The protein localises to the cytoplasm. The enzyme catalyses phosphoenolpyruvate + UDP-N-acetyl-alpha-D-glucosamine = UDP-N-acetyl-3-O-(1-carboxyvinyl)-alpha-D-glucosamine + phosphate. Its pathway is cell wall biogenesis; peptidoglycan biosynthesis. Its function is as follows. Cell wall formation. Adds enolpyruvyl to UDP-N-acetylglucosamine. The polypeptide is UDP-N-acetylglucosamine 1-carboxyvinyltransferase (Methylorubrum extorquens (strain PA1) (Methylobacterium extorquens)).